A 314-amino-acid chain; its full sequence is MAEEPQRSPAPTSPFAFTVPSNSLSELPDIPPDRPVLIAGPTASGKSALAARLVEDGGGAVVNADALQVYDCWRLLSARPSAAEEAALPHRLYGHVGARQTYSAGHWLKEVAGVLAEGLRPVIVGGTGLYFSALTGGLAEIPHTPPEVRAAADARLAEAGLARMVAELDAETAARIDLQNPARVQRAWEVLRATGRGLARWQAETAPPLLPLSDATALVIRPDPAWLAQRIDSRFDLMMADGALDEVRAALPDWDPTLPSARAIGAPELVAHLRGEIPLDEAVAAAKLASRQYAKRQRTWFRNRMRLWHEIRLP.

Residues 1–25 (MAEEPQRSPAPTSPFAFTVPSNSLS) are disordered. 40-47 (GPTASGKS) provides a ligand contact to ATP. 42 to 47 (TASGKS) is a substrate binding site.

This sequence belongs to the IPP transferase family. Monomer. Mg(2+) serves as cofactor.

It carries out the reaction adenosine(37) in tRNA + dimethylallyl diphosphate = N(6)-dimethylallyladenosine(37) in tRNA + diphosphate. Functionally, catalyzes the transfer of a dimethylallyl group onto the adenine at position 37 in tRNAs that read codons beginning with uridine, leading to the formation of N6-(dimethylallyl)adenosine (i(6)A). This Cereibacter sphaeroides (strain ATCC 17023 / DSM 158 / JCM 6121 / CCUG 31486 / LMG 2827 / NBRC 12203 / NCIMB 8253 / ATH 2.4.1.) (Rhodobacter sphaeroides) protein is tRNA dimethylallyltransferase.